The sequence spans 306 residues: tRNA dimethylallyltransferase (306 aa).

ATP is bound at residue 9-16 (GPTAIGKT). 11 to 16 (TAIGKT) contributes to the substrate binding site. An interaction with substrate tRNA region spans residues 34–37 (DSMQ).

It belongs to the IPP transferase family. In terms of assembly, monomer. Mg(2+) is required as a cofactor.

The enzyme catalyses adenosine(37) in tRNA + dimethylallyl diphosphate = N(6)-dimethylallyladenosine(37) in tRNA + diphosphate. Its function is as follows. Catalyzes the transfer of a dimethylallyl group onto the adenine at position 37 in tRNAs that read codons beginning with uridine, leading to the formation of N6-(dimethylallyl)adenosine (i(6)A). This chain is tRNA dimethylallyltransferase, found in Lactobacillus helveticus (strain DPC 4571).